The sequence spans 72 residues: Translation initiation factor IF-1 (72 aa).

The 72-residue stretch at 1-72 (MAKEDTIQMQ…TRARIVFRAR (72 aa)) folds into the S1-like domain.

It belongs to the IF-1 family. Component of the 30S ribosomal translation pre-initiation complex which assembles on the 30S ribosome in the order IF-2 and IF-3, IF-1 and N-formylmethionyl-tRNA(fMet); mRNA recruitment can occur at any time during PIC assembly.

Its subcellular location is the cytoplasm. In terms of biological role, one of the essential components for the initiation of protein synthesis. Stabilizes the binding of IF-2 and IF-3 on the 30S subunit to which N-formylmethionyl-tRNA(fMet) subsequently binds. Helps modulate mRNA selection, yielding the 30S pre-initiation complex (PIC). Upon addition of the 50S ribosomal subunit IF-1, IF-2 and IF-3 are released leaving the mature 70S translation initiation complex. In Neisseria gonorrhoeae (strain ATCC 700825 / FA 1090), this protein is Translation initiation factor IF-1.